Here is a 244-residue protein sequence, read N- to C-terminus: Tubulin-folding cofactor B (244 aa).

Position 1 is an N-acetylmethionine (M1). Residue S65 is modified to Phosphoserine; by PAK1. At Y98 the chain carries Phosphotyrosine. The residue at position 110 (S110) is a Phosphoserine. S128 carries the phosphoserine; by PAK1 modification. The CAP-Gly domain maps to 183–225 (GLTDFKPGYWVGVRYDEPLGKNDGSVNGKRYFECQAKYGAFVK). K219 bears the N6-acetyllysine mark.

The protein belongs to the TBCB family. In terms of assembly, supercomplex made of cofactors A to E. Cofactors A and D function by capturing and stabilizing tubulin in a quasi-native conformation. Cofactor E binds to the cofactor D-tubulin complex; interaction with cofactor C then causes the release of tubulin polypeptides that are committed to the native state. Cofactors B and E can form a heterodimer which binds to alpha-tubulin and enhances their ability to dissociate tubulin heterodimers. Interacts with GAN. Interacts with DCTN1. In terms of processing, phosphorylation by PAK1 is required for normal function. Ubiquitinated in the presence of GAN which targets it for degradation by the proteasome. As to expression, widely expressed with highest levels in brain. Broadly distributed throughout the neonate brain but restricted mainly to ependymary cells in the adult brain where it is concentrated in the cilia.

It localises to the cytoplasm. The protein resides in the cytoskeleton. Functionally, binds to alpha-tubulin folding intermediates after their interaction with cytosolic chaperonin in the pathway leading from newly synthesized tubulin to properly folded heterodimer. Involved in regulation of tubulin heterodimer dissociation. May function as a negative regulator of axonal growth. The sequence is that of Tubulin-folding cofactor B (Tbcb) from Mus musculus (Mouse).